The chain runs to 421 residues: Testin (421 aa).

The PET domain occupies 92-199 (MILTNPVAAK…GDVKLPREMD (108 aa)). Residues 133 to 164 (EKQPVAGSEGAQYRKKQLAKQLPAHDQDPSKC) form a disordered region. Over residues 155–164 (PAHDQDPSKC) the composition is skewed to basic and acidic residues. 3 LIM zinc-binding domains span residues 234-297 (YSCY…CDSE), 299-359 (PRCA…NHAV), and 362-421 (QGCH…KMMS).

This sequence belongs to the prickle / espinas / testin family. Interacts via LIM domain 1 with ZYX. Interacts (via LIM domain 3) with ENAH and VASP. Interacts with ALKBH4, talin, actin, alpha-actinin, GRIP1 and PXN. Interacts (via LIM domain 2) with ACTL7A (via N-terminus). Heterodimer with ACTL7A; the heterodimer interacts with ENAH to form a heterotrimer.

The protein localises to the cytoplasm. Its subcellular location is the cell junction. It is found in the focal adhesion. Functionally, scaffold protein that may play a role in cell adhesion, cell spreading and in the reorganization of the actin cytoskeleton. Plays a role in the regulation of cell proliferation. May act as a tumor suppressor. This chain is Testin (TES), found in Canis lupus familiaris (Dog).